We begin with the raw amino-acid sequence, 750 residues long: Photosystem I P700 chlorophyll a apoprotein A1 (750 aa).

8 consecutive transmembrane segments (helical) span residues 70–93 (VFSA…FHGA), 156–179 (LYCT…FHYH), 195–219 (LNHH…HVSL), 291–309 (IAHH…GHMY), 346–369 (WHAQ…HHMY), 385–411 (LSLF…IFMV), 433–455 (AIIS…LYIH), and 531–549 (FLVH…LILL). 2 residues coordinate [4Fe-4S] cluster: C573 and C582. The next 2 helical transmembrane spans lie at 589–610 (HVFL…HFSW) and 664–686 (LSAY…MFLF). A chlorophyll a'-binding site is contributed by H675. 2 residues coordinate chlorophyll a: M683 and Y691. W692 contributes to the phylloquinone binding site. A helical membrane pass occupies residues 724–744 (AVGVTHYLLGGIATTWAFFLA).

This sequence belongs to the PsaA/PsaB family. The PsaA/B heterodimer binds the P700 chlorophyll special pair and subsequent electron acceptors. PSI consists of a core antenna complex that captures photons, and an electron transfer chain that converts photonic excitation into a charge separation. The eukaryotic PSI reaction center is composed of at least 11 subunits. P700 is a chlorophyll a/chlorophyll a' dimer, A0 is one or more chlorophyll a, A1 is one or both phylloquinones and FX is a shared 4Fe-4S iron-sulfur center. serves as cofactor.

The protein resides in the plastid. Its subcellular location is the chloroplast thylakoid membrane. The catalysed reaction is reduced [plastocyanin] + hnu + oxidized [2Fe-2S]-[ferredoxin] = oxidized [plastocyanin] + reduced [2Fe-2S]-[ferredoxin]. Its function is as follows. PsaA and PsaB bind P700, the primary electron donor of photosystem I (PSI), as well as the electron acceptors A0, A1 and FX. PSI is a plastocyanin-ferredoxin oxidoreductase, converting photonic excitation into a charge separation, which transfers an electron from the donor P700 chlorophyll pair to the spectroscopically characterized acceptors A0, A1, FX, FA and FB in turn. Oxidized P700 is reduced on the lumenal side of the thylakoid membrane by plastocyanin. The polypeptide is Photosystem I P700 chlorophyll a apoprotein A1 (Calycanthus floridus var. glaucus (Eastern sweetshrub)).